A 194-amino-acid polypeptide reads, in one-letter code: Glycerol-3-phosphate acyltransferase (194 aa).

6 helical membrane passes run 2–22 (AFFC…GVWI), 52–72 (LGVA…YIAS), 80–100 (DLVI…FISF), 112–132 (VFLF…ILVA), 137–157 (YVSL…FFTH), and 161–181 (YLFA…KTNI).

It belongs to the PlsY family. As to quaternary structure, probably interacts with PlsX.

The protein localises to the cell inner membrane. The catalysed reaction is an acyl phosphate + sn-glycerol 3-phosphate = a 1-acyl-sn-glycero-3-phosphate + phosphate. It functions in the pathway lipid metabolism; phospholipid metabolism. Catalyzes the transfer of an acyl group from acyl-phosphate (acyl-PO(4)) to glycerol-3-phosphate (G3P) to form lysophosphatidic acid (LPA). This enzyme utilizes acyl-phosphate as fatty acyl donor, but not acyl-CoA or acyl-ACP. This Fusobacterium nucleatum subsp. nucleatum (strain ATCC 25586 / DSM 15643 / BCRC 10681 / CIP 101130 / JCM 8532 / KCTC 2640 / LMG 13131 / VPI 4355) protein is Glycerol-3-phosphate acyltransferase.